The following is a 376-amino-acid chain: Anhydro-N-acetylmuramic acid kinase (376 aa).

Position 16 to 23 (16 to 23 (GTSMDGVD)) interacts with ATP.

This sequence belongs to the anhydro-N-acetylmuramic acid kinase family.

It catalyses the reaction 1,6-anhydro-N-acetyl-beta-muramate + ATP + H2O = N-acetyl-D-muramate 6-phosphate + ADP + H(+). It functions in the pathway amino-sugar metabolism; 1,6-anhydro-N-acetylmuramate degradation. The protein operates within cell wall biogenesis; peptidoglycan recycling. Its function is as follows. Catalyzes the specific phosphorylation of 1,6-anhydro-N-acetylmuramic acid (anhMurNAc) with the simultaneous cleavage of the 1,6-anhydro ring, generating MurNAc-6-P. Is required for the utilization of anhMurNAc either imported from the medium or derived from its own cell wall murein, and thus plays a role in cell wall recycling. This chain is Anhydro-N-acetylmuramic acid kinase, found in Paraburkholderia xenovorans (strain LB400).